A 1257-amino-acid chain; its full sequence is LIM domain kinase 1 (1257 aa).

Residues 1 to 24 form a disordered region; sequence MHHQQRLRANGGRGGTGLGAGSGP. The tract at residues 1–147 is interaction with LATS1; sequence MHHQQRLRAN…ERSKLYCGQC (147 aa). Residues 11–24 show a composition bias toward gly residues; sequence GGRGGTGLGAGSGP. 2 LIM zinc-binding domains span residues 31 to 93 and 94 to 154; these read PLCA…RFGD and ACQQ…RSCQ. Residues 174-274 enclose the PDZ domain; sequence LVEIPKDATP…MLQLTVEHDP (101 aa). Positions 401-686 constitute a Protein kinase domain; the sequence is LVIGEKLGEG…PCFETLHVWL (286 aa). ATP-binding positions include 407–415 and lysine 430; that span reads LGEGFFGKV. Residue aspartate 522 is part of the active site. 3 disordered regions span residues 552-587, 759-811, and 881-900; these read LPSGNMTPGGYGSGANSDAPMSPSGTLRRSKSRQRR, QDIP…ERAL, and EELLEESTNKPSNQESQHHR. Residues 794-811 show a composition bias toward basic and acidic residues; that stretch reads QEERRNLTPDTESKERAL. Serine 1000 is subject to Phosphoserine. Disordered stretches follow at residues 1010 to 1037, 1085 to 1182, and 1212 to 1257; these read AKQLATPAPKRSKATATTKGGQSSNPPL, SAQQ…EKVH, and AAGT…NTRC. Composition is skewed to polar residues over residues 1085–1095 and 1113–1125; these read SAQQQRTSSNH and RTGSQGIPASNCV. 2 stretches are compositionally biased toward low complexity: residues 1126–1137 and 1145–1166; these read SPTRSSRPGSPT and TAATAQRLTNAAATHQQQHQQQ.

The protein belongs to the protein kinase superfamily. TKL Ser/Thr protein kinase family. Interacts with LATS1, and this interaction inhibits phosphorylation of tsr/cofilin. Post-translationally, phosphorylated on serine and/or threonine residues by ROCK1. Phosphorylated by PAK4 resulting in increased LIMK1 ability to phosphorylate cofilin. May be dephosphorylated and inactivated by SSH1. Expressed throughout the imaginal disks of the eye, leg and wing.

The protein localises to the cytoplasm. The protein resides in the cleavage furrow. Its subcellular location is the midbody. It carries out the reaction L-seryl-[protein] + ATP = O-phospho-L-seryl-[protein] + ADP + H(+). The enzyme catalyses L-threonyl-[protein] + ATP = O-phospho-L-threonyl-[protein] + ADP + H(+). Functionally, protein kinase which regulates actin filament dynamics. Phosphorylates and inactivates the actin binding/depolymerizing factor tsr/cofilin, thereby stabilizing the actin cytoskeleton. Modulation of actin cytoskeleton dynamics may be essential for imaginal disk morphogenesis and axon guidance. The polypeptide is LIM domain kinase 1 (LIMK1) (Drosophila melanogaster (Fruit fly)).